A 452-amino-acid chain; its full sequence is Pup--protein ligase (452 aa).

Glu9 serves as a coordination point for Mg(2+). Arg53 is a binding site for ATP. Tyr55 is a binding site for Mg(2+). Residue Asp57 is the Proton acceptor of the active site. Glu63 is a Mg(2+) binding site. Residues Thr66 and Trp419 each coordinate ATP.

It belongs to the Pup ligase/Pup deamidase family. Pup-conjugating enzyme subfamily.

The catalysed reaction is ATP + [prokaryotic ubiquitin-like protein]-L-glutamate + [protein]-L-lysine = ADP + phosphate + N(6)-([prokaryotic ubiquitin-like protein]-gamma-L-glutamyl)-[protein]-L-lysine.. It functions in the pathway protein degradation; proteasomal Pup-dependent pathway. The protein operates within protein modification; protein pupylation. Catalyzes the covalent attachment of the prokaryotic ubiquitin-like protein modifier Pup to the proteasomal substrate proteins, thereby targeting them for proteasomal degradation. This tagging system is termed pupylation. The ligation reaction involves the side-chain carboxylate of the C-terminal glutamate of Pup and the side-chain amino group of a substrate lysine. The chain is Pup--protein ligase from Thermobifida fusca (strain YX).